Consider the following 691-residue polypeptide: Elongation factor G (691 aa).

One can recognise a tr-type G domain in the interval 10-284; that stretch reads KMYRNIGIMA…AIVKYLPSPL (275 aa). Residues 19 to 26, 83 to 87, and 137 to 140 contribute to the GTP site; these read AHIDAGKT, DTPGH, and NKMD.

It belongs to the TRAFAC class translation factor GTPase superfamily. Classic translation factor GTPase family. EF-G/EF-2 subfamily.

Its subcellular location is the cytoplasm. Its function is as follows. Catalyzes the GTP-dependent ribosomal translocation step during translation elongation. During this step, the ribosome changes from the pre-translocational (PRE) to the post-translocational (POST) state as the newly formed A-site-bound peptidyl-tRNA and P-site-bound deacylated tRNA move to the P and E sites, respectively. Catalyzes the coordinated movement of the two tRNA molecules, the mRNA and conformational changes in the ribosome. The chain is Elongation factor G from Clostridium tetani (strain Massachusetts / E88).